Here is a 225-residue protein sequence, read N- to C-terminus: MKAFIVRVLLIFIGAILLIQLWIFSSLVWWRTHEVDTTMFMRIDYWSDPSEPIIHEWLDYDDISDNFKHAILAGEDAKFIHHHGFDWDGIRFALERNNEQGEVVAGGSTVSQQLAKNLFLYNKRSFIRKGQETVATWMMERMWSKRRILEVYMNSVEFGKNLYGVEAAAQYYYGKSAKSLTREQAAFLAALLPDPKYYQDHRNDRKLQYRKRVILRYMNSTQIPE.

Residues 8 to 28 (VLLIFIGAILLIQLWIFSSLV) form a helical membrane-spanning segment.

Belongs to the glycosyltransferase 51 family.

It is found in the cell inner membrane. It carries out the reaction [GlcNAc-(1-&gt;4)-Mur2Ac(oyl-L-Ala-gamma-D-Glu-L-Lys-D-Ala-D-Ala)](n)-di-trans,octa-cis-undecaprenyl diphosphate + beta-D-GlcNAc-(1-&gt;4)-Mur2Ac(oyl-L-Ala-gamma-D-Glu-L-Lys-D-Ala-D-Ala)-di-trans,octa-cis-undecaprenyl diphosphate = [GlcNAc-(1-&gt;4)-Mur2Ac(oyl-L-Ala-gamma-D-Glu-L-Lys-D-Ala-D-Ala)](n+1)-di-trans,octa-cis-undecaprenyl diphosphate + di-trans,octa-cis-undecaprenyl diphosphate + H(+). It participates in cell wall biogenesis; peptidoglycan biosynthesis. In terms of biological role, peptidoglycan polymerase that catalyzes glycan chain elongation from lipid-linked precursors. This chain is Biosynthetic peptidoglycan transglycosylase, found in Acinetobacter baumannii (strain ACICU).